A 576-amino-acid polypeptide reads, in one-letter code: Arginine--tRNA ligase (576 aa).

The short motif at 126–136 (ANPTGPMHIGH) is the 'HIGH' region element.

This sequence belongs to the class-I aminoacyl-tRNA synthetase family. Monomer.

The protein resides in the cytoplasm. It catalyses the reaction tRNA(Arg) + L-arginine + ATP = L-arginyl-tRNA(Arg) + AMP + diphosphate. The polypeptide is Arginine--tRNA ligase (Rickettsia akari (strain Hartford)).